Here is a 1082-residue protein sequence, read N- to C-terminus: Inner tegument protein (1082 aa).

The segment at 604 to 1082 (DHIDCLFNIS…QQDLIAPLTF (479 aa)) is interaction with large tegument protein.

It belongs to the herpesviridae inner tegument protein family. As to quaternary structure, interacts (via C-terminus) with the large tegument protein/LTP (via N-terminus).

Its subcellular location is the virion tegument. It is found in the host cytoplasm. The protein localises to the host nucleus. The protein resides in the host Golgi apparatus. It localises to the host trans-Golgi network. Its function is as follows. Plays an essential role in cytoplasmic secondary envelopment during viral egress. Interacts with the capsid via the large tegument protein/LTP and participates in its transport to the host trans-Golgi network (TGN) where secondary envelopment occurs. Modulates tegumentation and capsid accumulation at the viral assembly complex. In Homo sapiens (Human), this protein is Inner tegument protein (U30).